The chain runs to 526 residues: Choline/ethanolamine transporter FLVCR2 (526 aa).

The interval M1–S70 is disordered. At M1–S76 the chain is on the cytoplasmic side. A heme b-binding site is contributed by M1 to R84. 5 consecutive repeat copies span residues P25 to H30, P31 to H36, P37 to N42, P43 to H48, and P49 to H54. Over residues P25–S56 the composition is skewed to low complexity. The interval P25–P72 is 8 X 6 AA tandem repeats of P-S-[VS]-S-[VIAG]-[HNP]. One copy of the 6; approximate repeat lies at P55–Q60. A 7; approximate repeat occupies P61–H66. Repeat 8 spans residues P67 to P72. The helical transmembrane segment at V77–Q101 threads the bilayer. Residues N98 and W102 each coordinate choline. At W102–S119 the chain is on the extracellular side. The chain crosses the membrane as a helical span at residues A120–K147. Residues F148 to G149 are Cytoplasmic-facing. A helical membrane pass occupies residues L150–L169. Residues G170–L176 lie on the Extracellular side of the membrane. Residues F177–W205 form a helical membrane-spanning segment. Choline contacts are provided by Q191 and L195. Residues F206–E210 are Cytoplasmic-facing. The helical transmembrane segment at V211–L236 threads the bilayer. Over V237–E241 the chain is Extracellular. The chain crosses the membrane as a helical span at residues D242–V271. Residues F272–N307 are Cytoplasmic-facing. The chain crosses the membrane as a helical span at residues L308–H338. Residue Y325 coordinates choline. Residues Y339–E342 lie on the Extracellular side of the membrane. A helical transmembrane segment spans residues E343–S371. The Cytoplasmic portion of the chain corresponds to K372–T373. The chain crosses the membrane as a helical span at residues Y374 to L396. Over N397–G399 the chain is Extracellular. The chain crosses the membrane as a helical span at residues H400–L429. Topologically, residues T430–I437 are cytoplasmic. The helical transmembrane segment at S438–N463 threads the bilayer. Q447 is a choline binding site. Over Y464 to G465 the chain is Extracellular. A helical membrane pass occupies residues T466–K488. Residues A489 to L526 lie on the Cytoplasmic side of the membrane. Residues T500–L526 form a disordered region. Residue S515 is modified to Phosphoserine.

Belongs to the major facilitator superfamily. Feline leukemia virus subgroup C receptor (TC 2.A.1.28.1) family. Interacts with components of electron transfer chain complexes III, IV and V including CYC1, NDUFA4, COX4I1, ATP5PD and ATP5F1C; these interactions occur in the absence of heme and are disrupted upon heme binding. Interacts with ATP2A2; this interaction occurs in the absence of heme and promotes ATP2A2 proteasomal degradation; the complex is dissociated upon heme binding. Interacts with HMOX1; this interaction is potentiated in the presence of heme. In terms of tissue distribution, expressed in non-hematopoietic tissues, with relative abundant expression in brain, placenta, lung, liver and kidney. Also expressed in hematopoietic tissues (fetal liver, spleen, lymph node, thymus, leukocytes and bone marrow). Found in acidophil cells of the pituitary that secrete growth hormone and prolactin (at protein level).

The protein localises to the cell membrane. It localises to the mitochondrion membrane. It is found in the endoplasmic reticulum membrane. It catalyses the reaction choline(out) = choline(in). The catalysed reaction is ethanolamine(in) = ethanolamine(out). It carries out the reaction heme b(in) = heme b(out). In terms of biological role, choline uniporter that specifically mediates choline uptake at the blood-brain-barrier. Responsible for the majority of choline uptake across the blood-brain-barrier from the circulation into the brain. Choline, a nutrient critical for brain development, is a precursor of phosphatidylcholine, as well as betaine. Also mediates transport of ethanolamine. Choline and ethanolamine transport is not coupled with proton transport and is exclusively driven by the choline gradient across the plasma membrane. However, the presence of an inwardly directed proton gradient enhances choline uptake. Also acts as a heme b transporter. Required to regulate mitochondrial respiration processes, ATP synthesis and thermogenesis. At low heme levels, interacts with components of electron transfer chain (ETC) complexes and ATP2A2, leading to ubiquitin-mediated degradation of ATP2A2 and inhibition of thermogenesis. Upon heme binding, dissociates from ETC complexes to allow switching from mitochondrial ATP synthesis to thermogenesis. The chain is Choline/ethanolamine transporter FLVCR2 from Homo sapiens (Human).